The chain runs to 99 residues: MANVNIKPLEDRVLVQIVEAETTTASGLVIPDSAKEKPQEATVIAVGPGRWADDDDRIPMDVKEGDTVVFSKYGGTELKYNGEEYLLLTQRDILAVIEK.

The protein belongs to the GroES chaperonin family. Heptamer of 7 subunits arranged in a ring. Interacts with the chaperonin GroEL.

It is found in the cytoplasm. Functionally, together with the chaperonin GroEL, plays an essential role in assisting protein folding. The GroEL-GroES system forms a nano-cage that allows encapsulation of the non-native substrate proteins and provides a physical environment optimized to promote and accelerate protein folding. GroES binds to the apical surface of the GroEL ring, thereby capping the opening of the GroEL channel. The sequence is that of Co-chaperonin GroES from Corynebacterium jeikeium (strain K411).